Reading from the N-terminus, the 347-residue chain is NADH-ubiquinone oxidoreductase chain 2 (347 aa).

Helical transmembrane passes span 1 to 21 (MNPLAQPIIYSTIFAGTLITA), 25 to 45 (HWFLTWVGLEMNMLAFIPVLT), 55 to 75 (AAIKYFLVQATASMILMMAIL), 96 to 116 (TMMLMALAMKLGMAPFHFWVP), 123 to 143 (TLMSGLLLLTWQKLAPISIMY), 145 to 165 (IFPVVNVNILLAFSILSIMVG), 178 to 198 (ILAYSSITHVGWMMAVLPYNP), 200 to 220 (ITIFNLIIYIVLTTTAFLALN), 237 to 257 (LTWLLPLIPSTLLSLGGLPPL), 274 to 294 (GTLIIPTAMAIITLINLYFYM), and 324 to 344 (FLLPTLMTLTTLLLPIAPLTF).

It belongs to the complex I subunit 2 family. In terms of assembly, core subunit of respiratory chain NADH dehydrogenase (Complex I) which is composed of 45 different subunits. Interacts with TMEM242.

It localises to the mitochondrion inner membrane. It carries out the reaction a ubiquinone + NADH + 5 H(+)(in) = a ubiquinol + NAD(+) + 4 H(+)(out). Its function is as follows. Core subunit of the mitochondrial membrane respiratory chain NADH dehydrogenase (Complex I) which catalyzes electron transfer from NADH through the respiratory chain, using ubiquinone as an electron acceptor. Essential for the catalytic activity and assembly of complex I. This chain is NADH-ubiquinone oxidoreductase chain 2, found in Hylobates lar (Lar gibbon).